The following is a 461-amino-acid chain: 3-deoxy-D-manno-octulosonic acid transferase (461 aa).

A helical; Signal-anchor transmembrane segment spans residues 2-22; that stretch reads MLLYYTLSFILLPVYFIIIFI. The RPE1 insert domain occupies 47-88; that stretch reads SALDFIQMSVNKEGFTDHKTTSYVDMHRNASLMYKLSLERSY. Glutamate 102 serves as the catalytic Proton acceptor. Residues 306–307, 347–349, and 372–375 contribute to the CMP site; these read PR, FGE, and NILE.

This sequence belongs to the glycosyltransferase group 1 family. Glycosyltransferase 30 subfamily.

It is found in the cell inner membrane. It carries out the reaction lipid IVA (E. coli) + CMP-3-deoxy-beta-D-manno-octulosonate = alpha-Kdo-(2-&gt;6)-lipid IVA (E. coli) + CMP + H(+). It participates in bacterial outer membrane biogenesis; LPS core biosynthesis. In terms of biological role, involved in lipopolysaccharide (LPS) biosynthesis. Catalyzes the transfer of 3-deoxy-D-manno-octulosonate (Kdo) residue(s) from CMP-Kdo to lipid IV(A), the tetraacyldisaccharide-1,4'-bisphosphate precursor of lipid A. The chain is 3-deoxy-D-manno-octulosonic acid transferase (waaA) from Rickettsia prowazekii (strain Madrid E).